A 56-amino-acid chain; its full sequence is Large ribosomal subunit protein bL33 (56 aa).

The protein belongs to the bacterial ribosomal protein bL33 family.

In Tropheryma whipplei (strain TW08/27) (Whipple's bacillus), this protein is Large ribosomal subunit protein bL33.